The following is a 249-amino-acid chain: Phosphatidylserine decarboxylase proenzyme (249 aa).

The Schiff-base intermediate with substrate; via pyruvic acid role is filled by S208. The residue at position 208 (S208) is a Pyruvic acid (Ser); by autocatalysis.

It belongs to the phosphatidylserine decarboxylase family. PSD-A subfamily. As to quaternary structure, heterodimer of a large membrane-associated beta subunit and a small pyruvoyl-containing alpha subunit. Pyruvate serves as cofactor. In terms of processing, is synthesized initially as an inactive proenzyme. Formation of the active enzyme involves a self-maturation process in which the active site pyruvoyl group is generated from an internal serine residue via an autocatalytic post-translational modification. Two non-identical subunits are generated from the proenzyme in this reaction, and the pyruvate is formed at the N-terminus of the alpha chain, which is derived from the carboxyl end of the proenzyme. The post-translation cleavage follows an unusual pathway, termed non-hydrolytic serinolysis, in which the side chain hydroxyl group of the serine supplies its oxygen atom to form the C-terminus of the beta chain, while the remainder of the serine residue undergoes an oxidative deamination to produce ammonia and the pyruvoyl prosthetic group on the alpha chain.

It localises to the cell membrane. The enzyme catalyses a 1,2-diacyl-sn-glycero-3-phospho-L-serine + H(+) = a 1,2-diacyl-sn-glycero-3-phosphoethanolamine + CO2. Its pathway is phospholipid metabolism; phosphatidylethanolamine biosynthesis; phosphatidylethanolamine from CDP-diacylglycerol: step 2/2. Functionally, catalyzes the formation of phosphatidylethanolamine (PtdEtn) from phosphatidylserine (PtdSer). This Erythrobacter litoralis (strain HTCC2594) protein is Phosphatidylserine decarboxylase proenzyme.